The following is a 294-amino-acid chain: Nucleotide-binding protein CA_C0511 (294 aa).

8-15 (GLSGAGKT) serves as a coordination point for ATP. 59–62 (DIRG) contacts GTP.

The protein belongs to the RapZ-like family.

Its function is as follows. Displays ATPase and GTPase activities. This chain is Nucleotide-binding protein CA_C0511, found in Clostridium acetobutylicum (strain ATCC 824 / DSM 792 / JCM 1419 / IAM 19013 / LMG 5710 / NBRC 13948 / NRRL B-527 / VKM B-1787 / 2291 / W).